The chain runs to 319 residues: Ataxin-3 homolog (319 aa).

The Josephin domain maps to 8–179 (ISSIFFERQQ…NSEADDFITL (172 aa)). Catalysis depends on cysteine 21, which acts as the Nucleophile. The active-site Proton acceptor is the histidine 118. Residue asparagine 133 is part of the active site. 2 consecutive UIM domains span residues 218–237 (QEDR…KESS) and 242–261 (SDED…DPNI). A disordered region spans residues 253 to 319 (MSLSQDPNIP…EKKSQNVPEE (67 aa)). Polar residues predominate over residues 254–267 (SLSQDPNIPSTSAA). Residues 295-313 (QQRRDRAKFLEKLEEEKKS) show a composition bias toward basic and acidic residues. Positions 297 to 300 (RRDR) are interaction with cdc-48.1 and cdc-48.2.

Forms a complex composed of deubiquitinating enzyme atx-3, adapter ubxn-5 and cdc-48.1. Forms a complex composed of deubiquitinating enzyme atx-3, E4 ubiquitin-protein ligase ufd-2 and cdc-48.1. Interacts (via RRDR motif) with cdc-48.1 (via N-terminus) and cdc-48.2 (via N-terminus); the interaction with cdc-48.1 is not required for atx-3 enzymatic activity. Interacts (via C-terminus) with ubxn-5. May interact with ned-8.

The protein resides in the cytoplasm. The protein localises to the nucleus. It is found in the nucleolus. The enzyme catalyses Thiol-dependent hydrolysis of ester, thioester, amide, peptide and isopeptide bonds formed by the C-terminal Gly of ubiquitin (a 76-residue protein attached to proteins as an intracellular targeting signal).. Acts as a chain editing deubiquitinating enzyme that binds and cleaves 'Lys-48'-linked polyubiquitin chains, with a preference for chains containing four or more ubiquitin molecules thereby modulating protein degradation by the ubiquitin-proteasome pathway. Probably by regulating the IGF-1-insulin-like pathway, regulates lifespan. Regulates germline DNA double-strand-break repair and apoptosis in response to DNA damage by recruiting E4 ubiquitin-protein ligase ufd-2 to DNA repair foci. Interacts with key regulators of transcription and represses transcription. Acts as a histone-binding protein that regulates transcription. The protein is Ataxin-3 homolog of Caenorhabditis briggsae.